The following is a 331-amino-acid chain: Cathepsin S (331 aa).

A signal peptide spans 1–16 (MNWLVWALLLCSSAMA). The propeptide at 17–114 (HVHRDPTLDH…VTYKSDPNQK (98 aa)) is activation peptide. N-linked (GlcNAc...) asparagine glycosylation is present at Asn-104. Intrachain disulfides connect Cys-126–Cys-224, Cys-136–Cys-180, Cys-170–Cys-213, and Cys-272–Cys-320. Residue Cys-139 is part of the active site. Active-site residues include His-278 and Asn-298.

It belongs to the peptidase C1 family. Monomer.

The protein localises to the lysosome. It localises to the secreted. The protein resides in the cytoplasmic vesicle. It is found in the phagosome. It catalyses the reaction Similar to cathepsin L, but with much less activity on Z-Phe-Arg-|-NHMec, and more activity on the Z-Val-Val-Arg-|-Xaa compound.. Its function is as follows. Thiol protease. Key protease responsible for the removal of the invariant chain from MHC class II molecules and MHC class II antigen presentation. The bond-specificity of this proteinase is in part similar to the specificities of cathepsin L. The protein is Cathepsin S (CTSS) of Bos taurus (Bovine).